The primary structure comprises 662 residues: Glycogen debranching enzyme (662 aa).

D338 acts as the Nucleophile in catalysis. Catalysis depends on E373, which acts as the Proton donor.

This sequence belongs to the glycosyl hydrolase 13 family.

The enzyme catalyses Hydrolysis of (1-&gt;6)-alpha-D-glucosidic linkages to branches with degrees of polymerization of three or four glucose residues in limit dextrin.. It participates in glycan degradation; glycogen degradation. In terms of biological role, removes maltotriose and maltotetraose chains that are attached by 1,6-alpha-linkage to the limit dextrin main chain, generating a debranched limit dextrin. In Yersinia pestis, this protein is Glycogen debranching enzyme.